Consider the following 473-residue polypeptide: Azaphilone pigments biosynthesis cluster protein L (473 aa).

The N-terminal stretch at 1–23 (MAELSIASGIVGLLSLGIQVTQS) is a signal peptide. 2 ANK repeats span residues 403–432 (EYGN…DVNA) and 436–465 (RYGN…NVST). The N-linked (GlcNAc...) asparagine glycan is linked to N462.

Its function is as follows. Part of the gene cluster that mediates the biosynthesis of azaphilone pigments (MonAzPs), a complex mixture of compounds with a common azaphilone skeleton very widely used as food colorants. Seems not to play a direct role in the biosynthesis but might have a regulatorx function. In Monascus ruber (Mold), this protein is Azaphilone pigments biosynthesis cluster protein L.